The primary structure comprises 609 residues: NURS complex subunit pir2 (609 aa).

Positions 1-25 (MSEVHQESEVEYSRWKRERSPERSQ) are enriched in basic and acidic residues. Disordered regions lie at residues 1–60 (MSEV…RASG) and 187–210 (EKPS…QLSK). A compositionally biased stretch (low complexity) spans 27 to 36 (RSQSPPGEQS). Ser28 and Ser30 each carry phosphoserine. Residues 37–57 (AYHRERSPLRKRGNYYDDRTR) are compositionally biased toward basic and acidic residues. Polar residues predominate over residues 201–210 (LPSNDPQLSK). Residues 474-499 (YRCHVGTCAKLFLGPEFVRKHINKKH) form a C2H2-type zinc finger.

It belongs to the ARS2 family. Interacts with ccr4.

It is found in the nucleus. In Schizosaccharomyces pombe (strain 972 / ATCC 24843) (Fission yeast), this protein is NURS complex subunit pir2.